The sequence spans 250 residues: Ditrans,polycis-undecaprenyl-diphosphate synthase ((2E,6E)-farnesyl-diphosphate specific) (250 aa).

Aspartate 27 is an active-site residue. Mg(2+) is bound at residue aspartate 27. Residues 28–31 (GNGR), tryptophan 32, arginine 40, histidine 44, and 72–74 (SSE) each bind substrate. The active-site Proton acceptor is the asparagine 75. Substrate contacts are provided by tryptophan 76, arginine 78, and arginine 195. Histidine 200 contacts Mg(2+). Residue 201-203 (RIS) coordinates substrate. Position 214 (glutamate 214) interacts with Mg(2+).

Belongs to the UPP synthase family. Homodimer. Requires Mg(2+) as cofactor.

It catalyses the reaction 8 isopentenyl diphosphate + (2E,6E)-farnesyl diphosphate = di-trans,octa-cis-undecaprenyl diphosphate + 8 diphosphate. Its function is as follows. Catalyzes the sequential condensation of isopentenyl diphosphate (IPP) with (2E,6E)-farnesyl diphosphate (E,E-FPP) to yield (2Z,6Z,10Z,14Z,18Z,22Z,26Z,30Z,34E,38E)-undecaprenyl diphosphate (di-trans,octa-cis-UPP). UPP is the precursor of glycosyl carrier lipid in the biosynthesis of bacterial cell wall polysaccharide components such as peptidoglycan and lipopolysaccharide. The chain is Ditrans,polycis-undecaprenyl-diphosphate synthase ((2E,6E)-farnesyl-diphosphate specific) from Blochmanniella floridana.